We begin with the raw amino-acid sequence, 192 residues long: MIDFSRIQKELQDCERNQDSSGIRVCPKSDNLTRLTGTIPGPIGTPYEGGTFQIDITMPDGYPFEPPKMQFSTKVWHPNISSQSGAICLDILKDQWSPALTLKTALVSIQALLSAPEPKDPQDAVVAEQYMKNYQVFVSTARYWTETFAKKSSLEEKVKRLVEMGFGDAQVRSAIESSGGDENLALEKLCSA.

The region spanning 2–150 is the UBC core domain; sequence IDFSRIQKEL…ARYWTETFAK (149 aa). Cys-88 functions as the Glycyl thioester intermediate in the catalytic mechanism. Residues 153–192 form the UBA domain; it reads SLEEKVKRLVEMGFGDAQVRSAIESSGGDENLALEKLCSA.

The protein belongs to the ubiquitin-conjugating enzyme family. Expressed in seeds, pistils, siliques, hypocotyls and leaves.

It carries out the reaction S-ubiquitinyl-[E1 ubiquitin-activating enzyme]-L-cysteine + [E2 ubiquitin-conjugating enzyme]-L-cysteine = [E1 ubiquitin-activating enzyme]-L-cysteine + S-ubiquitinyl-[E2 ubiquitin-conjugating enzyme]-L-cysteine.. It functions in the pathway protein modification; protein ubiquitination. Functionally, accepts the ubiquitin from the E1 complex and catalyzes its covalent attachment to other proteins. This is Ubiquitin-conjugating enzyme E2 27 (UBC27) from Arabidopsis thaliana (Mouse-ear cress).